The sequence spans 155 residues: Protein-export protein SecB (155 aa).

This sequence belongs to the SecB family. Homotetramer, a dimer of dimers. One homotetramer interacts with 1 SecA dimer.

The protein localises to the cytoplasm. In terms of biological role, one of the proteins required for the normal export of preproteins out of the cell cytoplasm. It is a molecular chaperone that binds to a subset of precursor proteins, maintaining them in a translocation-competent state. It also specifically binds to its receptor SecA. The chain is Protein-export protein SecB from Enterobacter sp. (strain 638).